The sequence spans 454 residues: tRNA modification GTPase MnmE (454 aa).

Residues Arg-23, Glu-80, and Lys-120 each coordinate (6S)-5-formyl-5,6,7,8-tetrahydrofolate. The 162-residue stretch at 216-377 folds into the TrmE-type G domain; it reads GMKVVIAGRP…LRNHLKQSMG (162 aa). Residue Asn-226 coordinates K(+). GTP is bound by residues 226–231, 245–251, 270–273, 335–338, and 358–360; these read NAGKSS, TDIAGTT, DTAG, NKAD, and SAR. Residue Ser-230 coordinates Mg(2+). K(+) is bound by residues Thr-245, Ile-247, and Thr-250. Thr-251 serves as a coordination point for Mg(2+). (6S)-5-formyl-5,6,7,8-tetrahydrofolate is bound at residue Lys-454.

This sequence belongs to the TRAFAC class TrmE-Era-EngA-EngB-Septin-like GTPase superfamily. TrmE GTPase family. In terms of assembly, homodimer. Heterotetramer of two MnmE and two MnmG subunits. The cofactor is K(+).

The protein resides in the cytoplasm. Exhibits a very high intrinsic GTPase hydrolysis rate. Involved in the addition of a carboxymethylaminomethyl (cmnm) group at the wobble position (U34) of certain tRNAs, forming tRNA-cmnm(5)s(2)U34. The protein is tRNA modification GTPase MnmE of Salmonella paratyphi C (strain RKS4594).